Reading from the N-terminus, the 468-residue chain is Sorting and assembly machinery component 50 homolog B (468 aa).

The tract at residues 1–25 is disordered; sequence MGTVHARSLDPLPMNGPDFGSPDDA. The 81-residue stretch at 44-124 folds into the POTRA domain; that stretch reads VVVQRVHFEG…LDVTFEVTEL (81 aa).

This sequence belongs to the SAM50/omp85 family. As to quaternary structure, associates with the mitochondrial contact site and cristae organizing system (MICOS) complex (also known as MINOS or MitOS complex).

Its subcellular location is the mitochondrion outer membrane. Functionally, may play a role in the maintenance of the structure of mitochondrial cristae. The protein is Sorting and assembly machinery component 50 homolog B (samm50-b) of Xenopus laevis (African clawed frog).